The primary structure comprises 377 residues: Dual-specificity RNA methyltransferase RlmN (377 aa).

Residue Glu102 is the Proton acceptor of the active site. Residues 108–345 (EPDRRTLCVS…AVVRKNRGGD (238 aa)) enclose the Radical SAM core domain. Cys115 and Cys350 form a disulfide bridge. [4Fe-4S] cluster is bound by residues Cys122, Cys126, and Cys129. Residues 177-178 (GE), Ser209, 231-233 (SLN), and Asn307 contribute to the S-adenosyl-L-methionine site. The active-site S-methylcysteine intermediate is Cys350. The interval 354–377 (AAEGGPGDPRRPAPPPLTRLPAAG) is disordered.

This sequence belongs to the radical SAM superfamily. RlmN family. [4Fe-4S] cluster is required as a cofactor.

Its subcellular location is the cytoplasm. It carries out the reaction adenosine(2503) in 23S rRNA + 2 reduced [2Fe-2S]-[ferredoxin] + 2 S-adenosyl-L-methionine = 2-methyladenosine(2503) in 23S rRNA + 5'-deoxyadenosine + L-methionine + 2 oxidized [2Fe-2S]-[ferredoxin] + S-adenosyl-L-homocysteine. The enzyme catalyses adenosine(37) in tRNA + 2 reduced [2Fe-2S]-[ferredoxin] + 2 S-adenosyl-L-methionine = 2-methyladenosine(37) in tRNA + 5'-deoxyadenosine + L-methionine + 2 oxidized [2Fe-2S]-[ferredoxin] + S-adenosyl-L-homocysteine. In terms of biological role, specifically methylates position 2 of adenine 2503 in 23S rRNA and position 2 of adenine 37 in tRNAs. m2A2503 modification seems to play a crucial role in the proofreading step occurring at the peptidyl transferase center and thus would serve to optimize ribosomal fidelity. This is Dual-specificity RNA methyltransferase RlmN from Anaeromyxobacter sp. (strain Fw109-5).